A 347-amino-acid polypeptide reads, in one-letter code: Ribosomal RNA large subunit methyltransferase M (347 aa).

S-adenosyl-L-methionine contacts are provided by residues Ser-184, 217–220, Asp-236, Asp-256, and Asp-272; that span reads APGG. Residue Lys-301 is the Proton acceptor of the active site.

The protein belongs to the class I-like SAM-binding methyltransferase superfamily. RNA methyltransferase RlmE family. RlmM subfamily. Monomer.

Its subcellular location is the cytoplasm. The enzyme catalyses cytidine(2498) in 23S rRNA + S-adenosyl-L-methionine = 2'-O-methylcytidine(2498) in 23S rRNA + S-adenosyl-L-homocysteine + H(+). In terms of biological role, catalyzes the 2'-O-methylation at nucleotide C2498 in 23S rRNA. The sequence is that of Ribosomal RNA large subunit methyltransferase M from Xanthomonas campestris pv. campestris (strain 8004).